A 330-amino-acid polypeptide reads, in one-letter code: ADP-L-glycero-D-manno-heptose-6-epimerase (330 aa).

NADP(+) is bound by residues 11–12 (FI), 32–33 (DD), Gln39, Gln54, 75–79 (QGACA), and Asn92. Tyr139 functions as the Proton acceptor in the catalytic mechanism. NADP(+) is bound at residue Lys143. Asn168 contributes to the substrate binding site. Positions 169 and 177 each coordinate NADP(+). Lys177 acts as the Proton acceptor in catalysis. Residues Arg179, His186, 200 to 203 (FGEH), Arg213, and Tyr292 each bind substrate.

The protein belongs to the NAD(P)-dependent epimerase/dehydratase family. HldD subfamily. In terms of assembly, homopentamer. Requires NADP(+) as cofactor.

The catalysed reaction is ADP-D-glycero-beta-D-manno-heptose = ADP-L-glycero-beta-D-manno-heptose. It functions in the pathway nucleotide-sugar biosynthesis; ADP-L-glycero-beta-D-manno-heptose biosynthesis; ADP-L-glycero-beta-D-manno-heptose from D-glycero-beta-D-manno-heptose 7-phosphate: step 4/4. Catalyzes the interconversion between ADP-D-glycero-beta-D-manno-heptose and ADP-L-glycero-beta-D-manno-heptose via an epimerization at carbon 6 of the heptose. The polypeptide is ADP-L-glycero-D-manno-heptose-6-epimerase (Pseudomonas paraeruginosa (strain DSM 24068 / PA7) (Pseudomonas aeruginosa (strain PA7))).